The primary structure comprises 392 residues: Formate-dependent phosphoribosylglycinamide formyltransferase (392 aa).

Residues Glu20–Leu21 and Glu80 each bind N(1)-(5-phospho-beta-D-ribosyl)glycinamide. ATP-binding positions include Arg112, Lys153, Ser158–Gln163, Glu193–Val196, and Glu201. Positions Arg117 to Leu306 constitute an ATP-grasp domain. Mg(2+)-binding residues include Glu265 and Glu277. N(1)-(5-phospho-beta-D-ribosyl)glycinamide contacts are provided by residues Asp284, Lys355, and Arg362 to Arg363.

It belongs to the PurK/PurT family. In terms of assembly, homodimer.

It carries out the reaction N(1)-(5-phospho-beta-D-ribosyl)glycinamide + formate + ATP = N(2)-formyl-N(1)-(5-phospho-beta-D-ribosyl)glycinamide + ADP + phosphate + H(+). Its pathway is purine metabolism; IMP biosynthesis via de novo pathway; N(2)-formyl-N(1)-(5-phospho-D-ribosyl)glycinamide from N(1)-(5-phospho-D-ribosyl)glycinamide (formate route): step 1/1. Its function is as follows. Involved in the de novo purine biosynthesis. Catalyzes the transfer of formate to 5-phospho-ribosyl-glycinamide (GAR), producing 5-phospho-ribosyl-N-formylglycinamide (FGAR). Formate is provided by PurU via hydrolysis of 10-formyl-tetrahydrofolate. This chain is Formate-dependent phosphoribosylglycinamide formyltransferase, found in Aeromonas hydrophila subsp. hydrophila (strain ATCC 7966 / DSM 30187 / BCRC 13018 / CCUG 14551 / JCM 1027 / KCTC 2358 / NCIMB 9240 / NCTC 8049).